A 77-amino-acid chain; its full sequence is Acyl carrier protein (77 aa).

The Carrier domain maps to 2 to 77; sequence SSIEERVNKI…SAVDYIKAHS (76 aa). Residue Ser37 is modified to O-(pantetheine 4'-phosphoryl)serine.

This sequence belongs to the acyl carrier protein (ACP) family. Post-translationally, 4'-phosphopantetheine is transferred from CoA to a specific serine of apo-ACP by AcpS. This modification is essential for activity because fatty acids are bound in thioester linkage to the sulfhydryl of the prosthetic group.

The protein resides in the cytoplasm. The protein operates within lipid metabolism; fatty acid biosynthesis. Its function is as follows. Carrier of the growing fatty acid chain in fatty acid biosynthesis. The polypeptide is Acyl carrier protein (Alcanivorax borkumensis (strain ATCC 700651 / DSM 11573 / NCIMB 13689 / SK2)).